Consider the following 130-residue polypeptide: Small ribosomal subunit protein uS11 (130 aa).

It belongs to the universal ribosomal protein uS11 family. Part of the 30S ribosomal subunit. Interacts with proteins S7 and S18. Binds to IF-3.

Functionally, located on the platform of the 30S subunit, it bridges several disparate RNA helices of the 16S rRNA. Forms part of the Shine-Dalgarno cleft in the 70S ribosome. In Shewanella frigidimarina (strain NCIMB 400), this protein is Small ribosomal subunit protein uS11.